The chain runs to 340 residues: Mitochondrial calcium uniporter regulator 1 (340 aa).

The interval 1–44 (MDSGSVAAERPRRTPSRQRLPSSGCGVPARPGVSTLPGGRSWLR) is disordered. At 1–54 (MDSGSVAAERPRRTPSRQRLPSSGCGVPARPGVSTLPGGRSWLRPRGRAARASP) the chain is on the mitochondrial intermembrane side. The chain crosses the membrane as a helical span at residues 55-74 (LLFLLLVPSPRLAATATATA). At 75 to 316 (PRRTLAERSR…KTMLEAHKLD (242 aa)) the chain is on the mitochondrial matrix side. Positions 197–291 (ALQQVLSKIA…VSLHAQQDRA (95 aa)) form a coiled coil. Position 204 is an N6-acetyllysine (K204). Residues 317–339 (TIKYLAGSVFTCLTVALGFYRLW) form a helical membrane-spanning segment. Residue I340 is a topological domain, mitochondrial intermembrane.

It belongs to the CCDC90 family. Interacts (via coiled coil regions) with MCU; the interaction is direct. Interacts with SMDT1/EMRE; the interaction is direct. Interacts with PPIF.

The protein localises to the mitochondrion inner membrane. Functionally, key regulator of mitochondrial calcium uniporter (MCU) required for calcium entry into mitochondrion. Plays a direct role in uniporter-mediated calcium uptake via a direct interaction with MCU. Probably involved in the assembly of the membrane components of the uniporter complex (uniplex). The chain is Mitochondrial calcium uniporter regulator 1 from Mus musculus (Mouse).